The following is a 374-amino-acid chain: MKTVGYAIVGTGYFGAELGRIMKEQEGARIVAVLDPENGQTIAEELDCDVETDLDTLYSREDVEAVIVATPNYLHKEPVIKAAEHGVNVFCEKPIALSYQDCDEMVRTCQEHGVIFMAGHVMNFFHGVRYAKKLINDGVIGKVLYCHSARNGWEEQQPTISWKKIREKSGGHLYHHIHELDCVQFLMGGMPEEVTMTGGNVAHQGEAFGDEDDMLFVNMQFSDNRYAVLEWGSAFHWPEHYVLIQGTKGAIKIDMCDCGGTLKVDGREEHFLVHESQEEDDDRTRIYHGTEMDGAIMYGKPGKKPPMWLHSIMKNEMKYLNGILHGKEVDDEFRPLLTGEAARAAIATADACTKSRFEDRKVKLSEIIGEGSTI.

The NAD(+) site is built by Tyr13, Phe14, Asp35, Asn38, Thr70, Asn72, His75, Glu92, Lys93, Trp162, and Lys163.

This sequence belongs to the Gfo/Idh/MocA family. In terms of assembly, homodimer. Requires NAD(+) as cofactor.

It catalyses the reaction N-acetyl-2,7-anhydro-alpha-neuraminate + H2O = N-acetyl-alpha-neuraminate. With respect to regulation, neu5Ac is produced in the presence of NAD(+) or NADH, but not in the presence of FAD. Functionally, hydratase involved in the degradation of sialic acids, which are present in the host mucus layer and represent a much-coveted source of nutrients for R.gnavus, a prevalent member of the normal gut microbiota. Catalyzes the reversible conversion of the dehydrated form of N-acetylneuraminate (Neu5Ac), 2,7-anhydro-N-acetylneuraminate (2,7-AN), to Neu5Ac, allowing growth on 2,7-AN produced by the IT-sialidase NanH. Acts through a multistep mechanism involving a keto intermediate and cycling of NADH/NAD(+). This chain is 2,7-anhydro-N-acetylneuraminate hydratase, found in Mediterraneibacter gnavus (strain ATCC 29149 / DSM 114966 / JCM 6515 / VPI C7-9) (Ruminococcus gnavus).